We begin with the raw amino-acid sequence, 384 residues long: uncharacterized protein (384 aa).

Disordered regions lie at residues Arg-133–Asp-257 and Glu-297–Thr-368. Low complexity predominate over residues Pro-143–Ser-157. The segment covering Asp-302–Glu-315 has biased composition (acidic residues). Positions Gly-316–Arg-342 are enriched in basic and acidic residues. Basic residues predominate over residues Ser-343–Arg-363.

This is an uncharacterized protein from Gallid herpesvirus 2 (strain Chicken/Md5/ATCC VR-987) (GaHV-2).